The sequence spans 73 residues: MTKISTAKTFFINGQEYYTTNTINLHDLLNYFDFNSSLLVLEYNNFICNKKNWEKIMISNNDKIEIVTIVGGG.

Belongs to the ycf40 family.

The protein resides in the plastid. It localises to the chloroplast. This is an uncharacterized protein from Trieres chinensis (Marine centric diatom).